Here is a 531-residue protein sequence, read N- to C-terminus: MILPAPHVEYFLLAPMLIVFSVAVAGVLAEAFLPRRWRYGAQVTLALGGSAVALIAVIVVARSIHGSGHAAVLGAIAVDRATLFLQGTVLLVTIMAVVFMAERSARVSPQRQNTLAVARLPGLDSFTPQLSAVPGSDAERQAERAGATQTELFPLAMLSVGGMMVFPASNDLLTMFVALEVLSLPLYLMCGLARNRRLLSQEAAMKYFLLGAFSSAFFLYGVALLYGATGTLTLPGIRDALAARTDDSMALAGVALLAVGLLFKVGAVPFHSWIPDVYQGAPTPITGFMAAATKVAAFGALLRVVYVALPPLHDQWRPVLWAIAILTMTVGTVTAVNQTNVKRMLAYSSVAHVGFILTGVIADNPAGLSATLFYLVAYSFSTMGAFAIVGLVRGADGSAGSEDADLSHWAGLGQRSPIVGVMLSMFLLAFAGIPLTSGFVSKFAVFRAAASAGAVPLVIVGVISSGVAAYFYVRVIVSMFFTEESGDTPHVAAPGVLSKAAIAVCTVVTVVLGIAPQPVLDLADQAAQLLR.

14 consecutive transmembrane segments (helical) span residues 8–28, 41–61, 81–101, 146–166, 172–192, 208–228, 250–270, 282–302, 318–338, 350–370, 372–392, 418–438, 453–473, and 500–520; these read VEYFLLAPMLIVFSVAVAGVL, AQVTLALGGSAVALIAVIVVA, ATLFLQGTVLLVTIMAVVFMA, GATQTELFPLAMLSVGGMMVF, LLTMFVALEVLSLPLYLMCGL, FLLGAFSSAFFLYGVALLYGA, ALAGVALLAVGLLFKVGAVPF, PTPITGFMAAATKVAAFGALL, PVLWAIAILTMTVGTVTAVNQ, VAHVGFILTGVIADNPAGLSA, LFYLVAYSFSTMGAFAIVGLV, IVGVMLSMFLLAFAGIPLTSG, GAVPLVIVGVISSGVAAYFYV, and AAIAVCTVVTVVLGIAPQPVL.

This sequence belongs to the complex I subunit 2 family. NDH-1 is composed of 14 different subunits. Subunits NuoA, H, J, K, L, M, N constitute the membrane sector of the complex.

The protein resides in the cell membrane. The catalysed reaction is a quinone + NADH + 5 H(+)(in) = a quinol + NAD(+) + 4 H(+)(out). Its function is as follows. NDH-1 shuttles electrons from NADH, via FMN and iron-sulfur (Fe-S) centers, to quinones in the respiratory chain. The immediate electron acceptor for the enzyme in this species is believed to be a menaquinone. Couples the redox reaction to proton translocation (for every two electrons transferred, four hydrogen ions are translocated across the cytoplasmic membrane), and thus conserves the redox energy in a proton gradient. This Mycobacterium tuberculosis (strain CDC 1551 / Oshkosh) protein is NADH-quinone oxidoreductase subunit N.